Reading from the N-terminus, the 361-residue chain is Protein RecA (361 aa).

77–84 (GPESSGKT) serves as a coordination point for ATP.

It belongs to the RecA family.

The protein localises to the cytoplasm. In terms of biological role, can catalyze the hydrolysis of ATP in the presence of single-stranded DNA, the ATP-dependent uptake of single-stranded DNA by duplex DNA, and the ATP-dependent hybridization of homologous single-stranded DNAs. It interacts with LexA causing its activation and leading to its autocatalytic cleavage. The polypeptide is Protein RecA (Sinorhizobium fredii (strain NBRC 101917 / NGR234)).